Here is a 421-residue protein sequence, read N- to C-terminus: DUF724 domain-containing protein 8 (421 aa).

Composition is skewed to polar residues over residues 149-165 (TQGSGDKTGDSVRNANE) and 199-213 (PRNQNGSGNDSTLEN). The tract at residues 149–229 (TQGSGDKTGD…NRKRKREENL (81 aa)) is disordered. The DUF724 domain occupies 246 to 420 (VLPFEKKLRI…LEFLATASAP (175 aa)). Residues 361-397 (EKVTAEKESVKAENKRKILELQRLNEEMDKEIAQSKS) are a coiled coil.

Expressed in leaves and flowers, and at lower levels in roots, stems and siliques.

It localises to the nucleus. Functionally, may be involved in the polar growth of plant cells via transportation of RNAs. This Arabidopsis thaliana (Mouse-ear cress) protein is DUF724 domain-containing protein 8.